Consider the following 629-residue polypeptide: Ribosomal protein S6 kinase 2 beta (629 aa).

In terms of domain architecture, Protein kinase 1 spans 62 to 321 (FVLLKVLGQG…AEELKRHPFF (260 aa)). ATP is bound by residues 68–76 (LGQGSFGKV) and Lys94. Asp187 (proton acceptor) is an active-site residue. A Phosphoserine modification is found at Ser221. In terms of domain architecture, AGC-kinase C-terminal spans 322–391 (STIDWNKLYR…VAPVLVEEDA (70 aa)). Position 359 is a phosphothreonine (Thr359). Ser363 carries the post-translational modification Phosphoserine. Ser380 carries the phosphoserine; by autocatalysis modification. Residues 416-629 (YTVRETIGVG…PEEILARIGS (214 aa)) form the Protein kinase 2 domain. ATP is bound by residues 422–430 (IGVGSYSVC) and Lys445. The Proton acceptor role is filled by Asp533. Thr571 carries the post-translational modification Phosphothreonine.

It belongs to the protein kinase superfamily. AGC Ser/Thr protein kinase family. S6 kinase subfamily. Mg(2+) serves as cofactor. Autophosphorylated on Ser-380, as part of the activation process.

The catalysed reaction is L-seryl-[protein] + ATP = O-phospho-L-seryl-[protein] + ADP + H(+). The enzyme catalyses L-threonyl-[protein] + ATP = O-phospho-L-threonyl-[protein] + ADP + H(+). Activated by multiple phosphorylations on threonine and serine residues. Its function is as follows. Serine/threonine kinase that may play a role in mediating the growth-factor and stress induced activation of transcription. The chain is Ribosomal protein S6 kinase 2 beta from Xenopus laevis (African clawed frog).